We begin with the raw amino-acid sequence, 623 residues long: Quinoprotein ethanol dehydrogenase (623 aa).

The signal sequence occupies residues 1 to 34 (MTIRSLPAALSPLSMAVQAVLLVSSLALAPAANA). Residues D45 and N51 each contribute to the Ca(2+) site. A pyrroloquinoline quinone-binding site is contributed by E95. A disulfide bridge connects residues C139 and C140. Residues R145, T189, and 207–209 (HGS) each bind pyrroloquinoline quinone. E213 is a binding site for Ca(2+). The segment at 242-279 (GRLNGKDSTPTGDVKAPSWPDDPTTETGKVESWSHGGG) is disordered. The Ca(2+) site is built by N300 and D350. The Proton acceptor role is filled by D350. R378 provides a ligand contact to pyrroloquinoline quinone. A disordered region spans residues 414–436 (RPVENEGQRPAKPLPGETKGKPV). 2 WD repeats span residues 515-556 (EHNE…ELWK) and 559-601 (TGSG…LTKP). Pyrroloquinoline quinone-binding residues include W523 and A587.

It belongs to the bacterial PQQ dehydrogenase family. Homodimer. It depends on pyrroloquinoline quinone as a cofactor. The cofactor is Ca(2+).

The protein localises to the periplasm. It carries out the reaction a primary alcohol + 2 Fe(III)-[cytochrome c] = an aldehyde + 2 Fe(II)-[cytochrome c] + 2 H(+). The catalysed reaction is ethanol + 2 Fe(III)-[cytochrome c] = acetaldehyde + 2 Fe(II)-[cytochrome c] + 2 H(+). It catalyses the reaction ethanol + A = acetaldehyde + AH2. The enzyme catalyses 1-propanol + 2 Fe(III)-[cytochrome c] = propanal + 2 Fe(II)-[cytochrome c] + 2 H(+). The protein operates within alcohol metabolism; ethanol degradation; acetate from ethanol: step 1/2. Enhanced by the presence of ethylamine or NH4(+) ions. In terms of biological role, catalyzes the oxidation of ethanol and other primary alcohols to the corresponding aldehydes, except methanol, which is not a substrate. Uses a specific inducible cytochrome c550, encoded by the adjacent gene in the locus, as electron acceptor. Is a key enzyme of the carbon and energy metabolism during growth of P.putida on ethanol as the sole carbon and energy source. Displays lower activity on secondary alcohols, aldehydes and diols. Is not active with sugar alcohols such as glycerol and D-sorbitol. In vitro, reacts well with phenazine methosulfate (PMS) as an electron acceptor but not with NAD(P), potassium ferricyanide, or molecular oxygen. This Pseudomonas putida (Arthrobacter siderocapsulatus) protein is Quinoprotein ethanol dehydrogenase.